A 152-amino-acid chain; its full sequence is Endoribonuclease YbeY (152 aa).

3 residues coordinate Zn(2+): His113, His117, and His123.

The protein belongs to the endoribonuclease YbeY family. Requires Zn(2+) as cofactor.

The protein localises to the cytoplasm. Functionally, single strand-specific metallo-endoribonuclease involved in late-stage 70S ribosome quality control and in maturation of the 3' terminus of the 16S rRNA. The polypeptide is Endoribonuclease YbeY (Acidovorax ebreus (strain TPSY) (Diaphorobacter sp. (strain TPSY))).